The primary structure comprises 622 residues: Phosphomethylpyrimidine synthase (622 aa).

Positions 109 to 130 are disordered; that stretch reads EPISNNNNDRQSSDKQLSFTTN. Substrate-binding positions include asparagine 234, methionine 263, tyrosine 292, histidine 328, 348–350, 389–392, and glutamate 428; these read SRG and DGLR. Position 432 (histidine 432) interacts with Zn(2+). Residue tyrosine 455 participates in substrate binding. Histidine 496 provides a ligand contact to Zn(2+). Residues cysteine 576, cysteine 579, and cysteine 584 each coordinate [4Fe-4S] cluster.

This sequence belongs to the ThiC family. In terms of assembly, homodimer. [4Fe-4S] cluster is required as a cofactor.

The catalysed reaction is 5-amino-1-(5-phospho-beta-D-ribosyl)imidazole + S-adenosyl-L-methionine = 4-amino-2-methyl-5-(phosphooxymethyl)pyrimidine + CO + 5'-deoxyadenosine + formate + L-methionine + 3 H(+). The protein operates within cofactor biosynthesis; thiamine diphosphate biosynthesis. Catalyzes the synthesis of the hydroxymethylpyrimidine phosphate (HMP-P) moiety of thiamine from aminoimidazole ribotide (AIR) in a radical S-adenosyl-L-methionine (SAM)-dependent reaction. This chain is Phosphomethylpyrimidine synthase, found in Baumannia cicadellinicola subsp. Homalodisca coagulata.